An 885-amino-acid chain; its full sequence is Alanine--tRNA ligase (885 aa).

Zn(2+) contacts are provided by His564, His568, Cys676, and His680.

The protein belongs to the class-II aminoacyl-tRNA synthetase family. Zn(2+) is required as a cofactor.

The protein resides in the cytoplasm. The catalysed reaction is tRNA(Ala) + L-alanine + ATP = L-alanyl-tRNA(Ala) + AMP + diphosphate. Its function is as follows. Catalyzes the attachment of alanine to tRNA(Ala) in a two-step reaction: alanine is first activated by ATP to form Ala-AMP and then transferred to the acceptor end of tRNA(Ala). Also edits incorrectly charged Ser-tRNA(Ala) and Gly-tRNA(Ala) via its editing domain. The chain is Alanine--tRNA ligase from Brucella ovis (strain ATCC 25840 / 63/290 / NCTC 10512).